Consider the following 237-residue polypeptide: MTRGEMKYEGKAKRVYATEQAGEYIVEYKDDATAFNGVKKAQIMGKGEINNAITAHLYPLLEAAGIPTHFLEKLSDREQRVRAVTIVPVEIIVRNVAAGSFSKRLGIEEGTPLPRPVVEYCYKSDALGDPLINTDTAVALGWATEADLARIRELSLQVRDFLVPYFEARGVRLVDFKLEFGKLSSGEIVLADEISPDTCRFWDAQTNEKMDKDRFRRDLGGVEDAYAEMLRRVTQSV.

This sequence belongs to the SAICAR synthetase family.

It catalyses the reaction 5-amino-1-(5-phospho-D-ribosyl)imidazole-4-carboxylate + L-aspartate + ATP = (2S)-2-[5-amino-1-(5-phospho-beta-D-ribosyl)imidazole-4-carboxamido]succinate + ADP + phosphate + 2 H(+). Its pathway is purine metabolism; IMP biosynthesis via de novo pathway; 5-amino-1-(5-phospho-D-ribosyl)imidazole-4-carboxamide from 5-amino-1-(5-phospho-D-ribosyl)imidazole-4-carboxylate: step 1/2. In Deinococcus deserti (strain DSM 17065 / CIP 109153 / LMG 22923 / VCD115), this protein is Phosphoribosylaminoimidazole-succinocarboxamide synthase.